The sequence spans 433 residues: Mitochondrial distribution and morphology protein 12 (433 aa).

In terms of domain architecture, SMP-LTD spans 1–433 (MSIDIDWERA…VYPSFWTFLI (433 aa)). Disordered regions lie at residues 62-113 (LSDP…GGQM), 180-279 (TPLG…RMRE), and 356-376 (GPETAAGSGGGDTLEPNSPRR). The segment covering 81–96 (SEERSPTREPVDRYGN) has biased composition (basic and acidic residues). The span at 214-236 (SAQSRPSTANTGNTLPSRDSMSV) shows a compositional bias: polar residues. Over residues 268–279 (PLDDTPPRRMRE) the composition is skewed to basic and acidic residues.

This sequence belongs to the MDM12 family. As to quaternary structure, component of the ER-mitochondria encounter structure (ERMES) or MDM complex, composed of MMM1, MDM10, MDM12 and MDM34. An MMM1 homodimer associates with one molecule of MDM12 on each side in a pairwise head-to-tail manner, and the SMP-LTD domains of MMM1 and MDM12 generate a continuous hydrophobic tunnel for phospholipid trafficking.

Its subcellular location is the mitochondrion outer membrane. The protein resides in the endoplasmic reticulum membrane. Its function is as follows. Component of the ERMES/MDM complex, which serves as a molecular tether to connect the endoplasmic reticulum (ER) and mitochondria. Components of this complex are involved in the control of mitochondrial shape and protein biogenesis, and function in nonvesicular lipid trafficking between the ER and mitochondria. MDM12 is required for the interaction of the ER-resident membrane protein MMM1 and the outer mitochondrial membrane-resident beta-barrel protein MDM10. The MDM12-MMM1 subcomplex functions in the major beta-barrel assembly pathway that is responsible for biogenesis of all mitochondrial outer membrane beta-barrel proteins, and acts in a late step after the SAM complex. The MDM10-MDM12-MMM1 subcomplex further acts in the TOM40-specific pathway after the action of the MDM12-MMM1 complex. Essential for establishing and maintaining the structure of mitochondria and maintenance of mtDNA nucleoids. This is Mitochondrial distribution and morphology protein 12 from Ajellomyces capsulatus (strain NAm1 / WU24) (Darling's disease fungus).